The primary structure comprises 507 residues: MAEEQARHVKNGLECIRALKAEPIGSLAIEEAMAAWSEISDNPGQERATCREEKAGSSGLSKPCLSAIGSTEGGAPRIRGQGPGESDDDAETLGIPPRNLQASSTGLQCYYVYDHSGEAVKGIQDADSIMVQSGLDGDSTLSGGDNESENSDVDIGEPDTEGYAITDRGSAPISMGFRASDVETAEGGEIHELLRLQSRGNNFPKLGKTLNVPPPPDPGRASTSGTPIKKGTERRLASFGTEIASLLTGGATQCARKSPSEPSGPGAPAGNVPEYVSNAALIQEWTPESGTTISPRSQNNEEGGDYYDDELFSDVQDIKTALAKIHEDNQKIISKLESLLLLKGEVESIKKQINRQNISISTLEGHLSSIMIAIPGLGKDPNDPTADVEINPDLKPIIGRDSGRALAEVLKKPVASRQLQGMTNGRTSSRGQLLKEFQPKPIGKKMSSAVGFVPDTGPASRSVIRSIIKSSRLEEDRKRYLMTLLDDIKGANDLAKFHQMLMKIIMK.

The interval 1–48 is interaction with N0; it reads MAEEQARHVKNGLECIRALKAEPIGSLAIEEAMAAWSEISDNPGQERA. 4 disordered regions span residues 41–99, 134–163, 201–231, and 250–273; these read DNPG…PPRN, GLDG…TEGY, NNFP…IKKG, and GATQ…GNVP. Ser86 bears the Phosphoserine mark. A compositionally biased stretch (low complexity) spans 134–145; that stretch reads GLDGDSTLSGGD. Positions 146 to 160 are enriched in acidic residues; the sequence is NESENSDVDIGEPDT. Ser151 bears the Phosphoserine mark. Residues 260 to 270 show a composition bias toward low complexity; it reads SEPSGPGAPAG. A multimerization region spans residues 304–376; that stretch reads GDYYDDELFS…LSSIMIAIPG (73 aa). 2 interaction with the L polymerase regions span residues 361 to 377 and 396 to 410; these read STLE…IPGL and PIIG…AEVL. A x domain (XD) region spans residues 457–507; sequence GPASRSVIRSIIKSSRLEEDRKRYLMTLLDDIKGANDLAKFHQMLMKIIMK. The interval 459-507 is interaction with the nucleocapsid (N-RNA); that stretch reads ASRSVIRSIIKSSRLEEDRKRYLMTLLDDIKGANDLAKFHQMLMKIIMK.

This sequence belongs to the morbillivirus P protein family. Homotetramer. Interacts (via multimerization domain and XD domain) with polymerase L; this interaction forms the polymerase L-P complex. Interacts (via N-terminus) with N0 (via Ncore); this interaction allows P to chaperon N0 to avoid N polymerization and non-specific RNA binding before encapsidation. Interacts (via C-terminus) with N-RNA template (via Ntail); this interaction maintains the P/L complex anchored to the nucleocapsid template during the sequential transcription. Interacts (via C-terminus) with protein C this interaction allows C to associate with the ribonucleocapsid. In terms of processing, phosphorylation on serines by host CK2 is necessary for the formation of viral factories.

Essential cofactor of the RNA polymerase L that plays a central role in the transcription and replication by forming the polymerase complex with RNA polymerase L and recruiting L to the genomic N-RNA template for RNA synthesis. Also plays a central role in the encapsidation of nascent RNA chains by forming the encapsidation complex with the nucleocapsid protein N (N-P complex). Acts as a chaperone for newly synthesized free N protein, so-called N0, allowing encapsidation of nascent RNA chains during replication. The nucleoprotein protein N prevents excessive phosphorylation of P, which leads to down-regulation of viral transcription/ replication. Participates, together with N, in the formation of viral factories (viroplasms), which are large inclusions in the host cytoplasm where replication takes place. This is Phosphoprotein (P/V) from Measles virus (strain Edmonston-AIK-C vaccine) (MeV).